The chain runs to 478 residues: NADH oxidase (478 aa).

FAD contacts are provided by residues 8–12 (GINHA), Asp-33, Cys-43, Val-80, 111–114 (ASGA), Lys-149, and Tyr-177. Catalysis depends on His-11, which acts as the Proton acceptor. Cys-43 (redox-active) is an active-site residue. At Cys-43 the chain carries Cysteine sulfinic acid (-SO2H). NAD(+)-binding positions include 170–185 (VAIV…LAEA), Asp-197, and Gly-264. Residues 295–305 (LNHKDVYVIGG), Leu-322, Ala-323, and Thr-324 contribute to the FAD site. Ala-353 lines the NAD(+) pocket. Residue Phe-450 coordinates FAD.

It belongs to the class-III pyridine nucleotide-disulfide oxidoreductase family. Requires FAD as cofactor.

The catalysed reaction is 2 NADH + O2 + 2 H(+) = 2 NAD(+) + 2 H2O. Functionally, catalyzes the four-electron reduction of molecular oxygen to water. This chain is NADH oxidase (nox), found in Mycoplasma genitalium (strain ATCC 33530 / DSM 19775 / NCTC 10195 / G37) (Mycoplasmoides genitalium).